The primary structure comprises 142 residues: Transcriptional regulator MraZ (142 aa).

2 SpoVT-AbrB domains span residues 5–47 (THSP…SERE) and 76–119 (ASDE…DAQA).

Belongs to the MraZ family. As to quaternary structure, forms oligomers.

The protein resides in the cytoplasm. Its subcellular location is the nucleoid. The chain is Transcriptional regulator MraZ from Arthrobacter sp. (strain FB24).